The chain runs to 730 residues: Actin filament-associated protein 1 (730 aa).

At methionine 1 the chain carries N-acetylmethionine. A disordered region spans residues 47–91 (KDHAQKQETANSLPAPPQMPLPEIPQPWLPPDSGPPPLPTSSLPE). Over residues 60–85 (PAPPQMPLPEIPQPWLPPDSGPPPLP) the composition is skewed to pro residues. Positions 71–74 (PQPW) match the SH3-binding motif. The SH2-binding 1 motif lies at 94-97 (YEEA). A disordered region spans residues 119–140 (SSSYESYDEEEEDGKGKKTRHQ). Residues 153–249 (DAKICAFLLR…WLKVIKEAYS (97 aa)) enclose the PH 1 domain. The interval 252–292 (SGPVDSECPPPPSSPVHKAELEKKLSSERPSSDGEGVVENG) is disordered. Residues 268 to 283 (HKAELEKKLSSERPSS) show a composition bias toward basic and acidic residues. Phosphoserine is present on residues serine 282 and serine 283. The 95-residue stretch at 347-441 (DVPTCGYLNV…WIGILLAETG (95 aa)) folds into the PH 2 domain. Positions 451–456 (YDYIDV) match the SH2-binding 2 motif. A disordered region spans residues 512-537 (KGKKPPVASNGVTGKGKTLSSQPKKA). Serine 548 carries the post-translational modification Phosphoserine. Residues 557–648 (KNRVEADAKR…VKESLKKALA (92 aa)) adopt a coiled-coil conformation. Residues 594-637 (DLRAAIEVNAGRKPQAILEEKLKQLEEECRQKEAERVSLELELT) form an interaction with F-actin region. A phosphoserine mark is found at serine 664, serine 665, and serine 668. Threonine 675 is subject to Phosphothreonine. Phosphoserine occurs at positions 679 and 687.

As to quaternary structure, monomer and homomultimer. Interacts via its C-terminus with F-actin; probably involving AFAP1 multimers. Interacts with activated SRC SH3-SH2 domains. Interacts via its PH 1 domain with PRKCA, PRKCB and PRKCI. Phosphorylated on tyrosine residues by SRC. In terms of tissue distribution, low expression in normal breast epithelial cell line MCF-10A and in tumorigenic breast cancer cell lines MCF-7, T-47D and ZR-75-1. Highly expressed in the invasive breast cancer cell lines MDA-MB-231 and MDA-MB-435. Overexpressed in prostate carcinoma.

Its subcellular location is the cytoplasm. It localises to the cytoskeleton. The protein resides in the stress fiber. Functionally, can cross-link actin filaments into both network and bundle structures. May modulate changes in actin filament integrity and induce lamellipodia formation. May function as an adapter molecule that links other proteins, such as SRC and PKC to the actin cytoskeleton. Seems to play a role in the development and progression of prostate adenocarcinoma by regulating cell-matrix adhesions and migration in the cancer cells. The chain is Actin filament-associated protein 1 (AFAP1) from Homo sapiens (Human).